The sequence spans 214 residues: Outer-membrane lipoprotein LolB (214 aa).

Residues 1-25 (MNNLKRLTKTIFSCFTLSALLLLAG) form the signal peptide. Cys-26 carries the N-palmitoyl cysteine lipid modification. Residue Cys-26 is the site of S-diacylglycerol cysteine attachment.

This sequence belongs to the LolB family. In terms of assembly, monomer.

The protein resides in the cell outer membrane. Its function is as follows. Plays a critical role in the incorporation of lipoproteins in the outer membrane after they are released by the LolA protein. The protein is Outer-membrane lipoprotein LolB of Shewanella baltica (strain OS155 / ATCC BAA-1091).